Consider the following 289-residue polypeptide: Inorganic pyrophosphatase (289 aa).

Position 2 is an N-acetylserine (Ser2). The residue at position 57 (Lys57) is an N6-acetyllysine. Mg(2+) is bound by residues Asp116, Asp121, and Asp153. Residue Lys228 is modified to N6-acetyllysine. Ser250 is subject to Phosphoserine.

It belongs to the PPase family. Homodimer. The cofactor is Mg(2+). As to expression, expressed ubiquitously.

It localises to the cytoplasm. The catalysed reaction is diphosphate + H2O = 2 phosphate + H(+). The sequence is that of Inorganic pyrophosphatase (PPA1) from Homo sapiens (Human).